Consider the following 248-residue polypeptide: 3-oxoacyl-[acyl-carrier-protein] reductase FabG (248 aa).

Residues 14–17 (GGSR), 65–66 (DV), and asparagine 92 contribute to the NADP(+) site. A substrate-binding site is contributed by serine 144. The active-site Proton acceptor is tyrosine 157. Residues 157–161 (YAAAK) and isoleucine 190 each bind NADP(+).

It belongs to the short-chain dehydrogenases/reductases (SDR) family. As to quaternary structure, homotetramer.

The enzyme catalyses a (3R)-hydroxyacyl-[ACP] + NADP(+) = a 3-oxoacyl-[ACP] + NADPH + H(+). Its pathway is lipid metabolism; fatty acid biosynthesis. Catalyzes the NADPH-dependent reduction of beta-ketoacyl-ACP substrates to beta-hydroxyacyl-ACP products, the first reductive step in the elongation cycle of fatty acid biosynthesis. This Chlamydia muridarum (strain MoPn / Nigg) protein is 3-oxoacyl-[acyl-carrier-protein] reductase FabG (fabG).